The primary structure comprises 74 residues: U5-theraphotoxin-Cg1a (74 aa).

An N-terminal signal peptide occupies residues 1–19; sequence MNATIFALLLLLNLAMYNA. Residues 20–39 constitute a propeptide that is removed on maturation; it reads AEQSSETDMDDTLLIPENYR. Intrachain disulfides connect Cys42-Cys56, Cys49-Cys61, and Cys55-Cys71.

It belongs to the neurotoxin 36 family. 01 subfamily. As to expression, expressed by the venom gland.

The protein resides in the secreted. Probable ion channel inhibitor. This Chilobrachys guangxiensis (Chinese earth tiger tarantula) protein is U5-theraphotoxin-Cg1a.